Reading from the N-terminus, the 478-residue chain is Lysosome membrane protein 2 (478 aa).

Over methionine 1–cysteine 4 the chain is Cytoplasmic. A helical membrane pass occupies residues cysteine 5–arginine 27. At valine 28 to leucine 433 the chain is on the lumenal side. Residues asparagine 45, asparagine 68, asparagine 105, and asparagine 122 are each glycosylated (N-linked (GlcNAc...) asparagine). The tract at residues leucine 155 to phenylalanine 191 is important for interaction with GBA1. 4 N-linked (GlcNAc...) asparagine glycosylation sites follow: asparagine 206, asparagine 224, asparagine 249, and asparagine 304. 2 disulfide bridges follow: cysteine 274–cysteine 329 and cysteine 312–cysteine 318. N-linked (GlcNAc...) asparagine glycans are attached at residues asparagine 325, asparagine 412, and asparagine 430. A helical membrane pass occupies residues valine 434 to arginine 459. Residues glycine 460–threonine 478 lie on the Cytoplasmic side of the membrane.

The protein belongs to the CD36 family. As to quaternary structure, interacts with GBA1. In terms of processing, acylated by palmitic acid group(s). Post-translationally, heavily glycosylated. As to expression, detected in the extracts of brain, heart, lung, liver and kidney.

The protein resides in the lysosome membrane. Acts as a lysosomal receptor for glucosylceramidase (GBA1) targeting. The chain is Lysosome membrane protein 2 (Scarb2) from Mus musculus (Mouse).